The chain runs to 185 residues: Ribosome-recycling factor (185 aa).

This sequence belongs to the RRF family.

Its subcellular location is the cytoplasm. Responsible for the release of ribosomes from messenger RNA at the termination of protein biosynthesis. May increase the efficiency of translation by recycling ribosomes from one round of translation to another. The protein is Ribosome-recycling factor of Glaesserella parasuis serovar 5 (strain SH0165) (Haemophilus parasuis).